Reading from the N-terminus, the 179-residue chain is UPF0134 protein MPN_145 (179 aa).

Belongs to the UPF0134 family.

This Mycoplasma pneumoniae (strain ATCC 29342 / M129 / Subtype 1) (Mycoplasmoides pneumoniae) protein is UPF0134 protein MPN_145.